A 158-amino-acid polypeptide reads, in one-letter code: Sec-independent protein translocase protein TatB (158 aa).

Residues 2-22 (FDGIGFMELLLIGVLGLVVLG) form a helical membrane-spanning segment. Residues 86-158 (LKQAAQSVNR…DTSSNPKANG (73 aa)) are disordered. Composition is skewed to polar residues over residues 88–107 (QAAQ…SQGT), 113–136 (QIHS…QHLT), and 143–158 (EPSQ…KANG).

This sequence belongs to the TatB family. As to quaternary structure, the Tat system comprises two distinct complexes: a TatABC complex, containing multiple copies of TatA, TatB and TatC subunits, and a separate TatA complex, containing only TatA subunits. Substrates initially bind to the TatABC complex, which probably triggers association of the separate TatA complex to form the active translocon.

Its subcellular location is the cell inner membrane. In terms of biological role, part of the twin-arginine translocation (Tat) system that transports large folded proteins containing a characteristic twin-arginine motif in their signal peptide across membranes. Together with TatC, TatB is part of a receptor directly interacting with Tat signal peptides. TatB may form an oligomeric binding site that transiently accommodates folded Tat precursor proteins before their translocation. The sequence is that of Sec-independent protein translocase protein TatB from Shewanella putrefaciens (strain CN-32 / ATCC BAA-453).